Consider the following 544-residue polypeptide: Membrane protein insertase YidC (544 aa).

5 helical membrane passes run 15 to 35, 321 to 341, 343 to 363, 409 to 429, and 506 to 526; these read LFLIGLFMLINDIFSSIMLSF, LWYLIQVPMQMVMQVFYDVIP, WGLSIIFLTIVVRILIFPLTF, LGGCFPVILQLPIFFALYSLV, and MPIMFFFILYNMPSGLLIYWI.

Belongs to the OXA1/ALB3/YidC family. Type 1 subfamily. As to quaternary structure, interacts with the Sec translocase complex via SecD. Specifically interacts with transmembrane segments of nascent integral membrane proteins during membrane integration.

It is found in the cell inner membrane. Functionally, required for the insertion and/or proper folding and/or complex formation of integral membrane proteins into the membrane. Involved in integration of membrane proteins that insert both dependently and independently of the Sec translocase complex, as well as at least some lipoproteins. Aids folding of multispanning membrane proteins. In Borrelia garinii subsp. bavariensis (strain ATCC BAA-2496 / DSM 23469 / PBi) (Borreliella bavariensis), this protein is Membrane protein insertase YidC.